The sequence spans 303 residues: Glycosyltransferase AglJ (303 aa).

A run of 2 helical transmembrane segments spans residues 230 to 250 and 263 to 283; these read FYFG…ALYV and VIAV…MFGV.

Belongs to the glycosyltransferase 2 family.

It localises to the cell membrane. It participates in cell surface structure biogenesis; S-layer biogenesis. Involved in the assembly of a N-linked pentasaccharide that decorates the S-layer glycoprotein and flagellins. Adds the first hexose subunit of the pentasaccharide to the dolichol phosphate carrier. The chain is Glycosyltransferase AglJ (aglJ) from Haloferax volcanii (strain ATCC 29605 / DSM 3757 / JCM 8879 / NBRC 14742 / NCIMB 2012 / VKM B-1768 / DS2) (Halobacterium volcanii).